Reading from the N-terminus, the 185-residue chain is Large ribosomal subunit protein bL25 (185 aa).

It belongs to the bacterial ribosomal protein bL25 family. CTC subfamily. In terms of assembly, part of the 50S ribosomal subunit; part of the 5S rRNA/L5/L18/L25 subcomplex. Contacts the 5S rRNA. Binds to the 5S rRNA independently of L5 and L18.

This is one of the proteins that binds to the 5S RNA in the ribosome where it forms part of the central protuberance. The polypeptide is Large ribosomal subunit protein bL25 (Chlamydia trachomatis serovar A (strain ATCC VR-571B / DSM 19440 / HAR-13)).